A 177-amino-acid polypeptide reads, in one-letter code: Transcription termination/antitermination protein NusG (177 aa).

Residues 125–150 (EGENVRITEGPFANFTAIVEEYDMVR) form the KOW domain.

The protein belongs to the NusG family.

Its function is as follows. Participates in transcription elongation, termination and antitermination. The sequence is that of Transcription termination/antitermination protein NusG from Campylobacter jejuni subsp. jejuni serotype O:2 (strain ATCC 700819 / NCTC 11168).